Here is a 280-residue protein sequence, read N- to C-terminus: Phosphonates import ATP-binding protein PhnC 1 (280 aa).

An ABC transporter domain is found at 2-246; that stretch reads LRIENLDKRY…VLTRIYGEED (245 aa). ATP is bound at residue 35–42; the sequence is GPSGAGKS. The interval 247-266 is disordered; sequence WSKTSDEDADSVDAPPRAAD.

The protein belongs to the ABC transporter superfamily. Phosphonates importer (TC 3.A.1.9.1) family. The complex is composed of two ATP-binding proteins (PhnC), two transmembrane proteins (PhnE) and a solute-binding protein (PhnD).

Its subcellular location is the cell inner membrane. It catalyses the reaction phosphonate(out) + ATP + H2O = phosphonate(in) + ADP + phosphate + H(+). Part of the ABC transporter complex PhnCDE involved in phosphonates import. Responsible for energy coupling to the transport system. This Rhodopseudomonas palustris (strain HaA2) protein is Phosphonates import ATP-binding protein PhnC 1.